A 196-amino-acid chain; its full sequence is Putative adenylate kinase (196 aa).

Positions 10, 12, 13, 14, and 15 each coordinate ATP. Positions 30 to 53 (YLNDLIKEEHLYSEVDEERDSVIA) are NMP. The LID stretch occupies residues 118 to 128 (KRGYSEEKINE). Arg119 lines the ATP pocket.

The protein belongs to the adenylate kinase family. AK6 subfamily. In terms of assembly, interacts with uS11. Not a structural component of 40S pre-ribosomes, but transiently interacts with them by binding to uS11.

The enzyme catalyses AMP + ATP = 2 ADP. It catalyses the reaction ATP + H2O = ADP + phosphate + H(+). Broad-specificity nucleoside monophosphate (NMP) kinase that catalyzes the reversible transfer of the terminal phosphate group between nucleoside triphosphates and monophosphates. Also has ATPase activity. Involved in the late maturation steps of the 30S ribosomal particles, specifically 16S rRNA maturation. While NMP activity is not required for ribosome maturation, ATPase activity is. Associates transiently with small ribosomal subunit protein uS11. ATP hydrolysis breaks the interaction with uS11. May temporarily remove uS11 from the ribosome to enable a conformational change of the ribosomal RNA that is needed for the final maturation step of the small ribosomal subunit. The chain is Putative adenylate kinase from Methanosarcina mazei (strain ATCC BAA-159 / DSM 3647 / Goe1 / Go1 / JCM 11833 / OCM 88) (Methanosarcina frisia).